The following is a 306-amino-acid chain: Glutaminase (306 aa).

Positions 64, 115, 159, 166, 190, 242, and 260 each coordinate substrate.

This sequence belongs to the glutaminase family. In terms of assembly, homotetramer.

The catalysed reaction is L-glutamine + H2O = L-glutamate + NH4(+). The chain is Glutaminase from Aeromonas hydrophila subsp. hydrophila (strain ATCC 7966 / DSM 30187 / BCRC 13018 / CCUG 14551 / JCM 1027 / KCTC 2358 / NCIMB 9240 / NCTC 8049).